The sequence spans 335 residues: Thioredoxin reductase (335 aa).

FAD contacts are provided by residues 22–25, 44–51, asparagine 60, and valine 93; these read SGPA and EGTSFGGA. An intrachain disulfide couples cysteine 145 to cysteine 148. NADP(+) is bound by residues serine 166, histidine 185, arginine 191, isoleucine 248, and tyrosine 268. FAD-binding positions include aspartate 288 and 295-298; that span reads RQAV. Arginine 295 contacts NADP(+).

This sequence belongs to the class-II pyridine nucleotide-disulfide oxidoreductase family. Homodimer. FAD is required as a cofactor.

The protein localises to the cytoplasm. The enzyme catalyses [thioredoxin]-dithiol + NADP(+) = [thioredoxin]-disulfide + NADPH + H(+). The chain is Thioredoxin reductase from Mycobacterium tuberculosis (strain CDC 1551 / Oshkosh).